The primary structure comprises 350 residues: RNA 3'-terminal phosphate cyclase (350 aa).

Residues Gln100 and 290 to 294 each bind ATP; that span reads FLGDQ. The Tele-AMP-histidine intermediate role is filled by His314.

It belongs to the RNA 3'-terminal cyclase family. Type 1 subfamily.

It is found in the cytoplasm. The enzyme catalyses a 3'-end 3'-phospho-ribonucleotide-RNA + ATP = a 3'-end 2',3'-cyclophospho-ribonucleotide-RNA + AMP + diphosphate. Its function is as follows. Catalyzes the conversion of 3'-phosphate to a 2',3'-cyclic phosphodiester at the end of RNA. The mechanism of action of the enzyme occurs in 3 steps: (A) adenylation of the enzyme by ATP; (B) transfer of adenylate to an RNA-N3'P to produce RNA-N3'PP5'A; (C) and attack of the adjacent 2'-hydroxyl on the 3'-phosphorus in the diester linkage to produce the cyclic end product. The biological role of this enzyme is unknown but it is likely to function in some aspects of cellular RNA processing. The chain is RNA 3'-terminal phosphate cyclase from Thermococcus sibiricus (strain DSM 12597 / MM 739).